A 97-amino-acid chain; its full sequence is U6-theraphotoxin-Hhn1a 2 (97 aa).

Positions 1 to 33 are cleaved as a signal peptide; sequence MLIKQFSRRPKNMKVQILLAFAALFVLAVGSYA. The propeptide occupies 34–61; the sequence is SESKKLDLRDASFSAMFSADYQLNPQER. 3 cysteine pairs are disulfide-bonded: cysteine 63–cysteine 77, cysteine 70–cysteine 82, and cysteine 76–cysteine 89.

Belongs to the neurotoxin 10 (Hwtx-1) family. 12 (Hntx-12) subfamily. Expressed by the venom gland.

The protein resides in the secreted. Its function is as follows. Ion channel inhibitor. This Cyriopagopus hainanus (Chinese bird spider) protein is U6-theraphotoxin-Hhn1a 2.